Consider the following 311-residue polypeptide: Aspartate carbamoyltransferase catalytic subunit (311 aa).

Carbamoyl phosphate-binding residues include Arg-55 and Thr-56. Residue Lys-85 participates in L-aspartate binding. Positions 106, 135, and 138 each coordinate carbamoyl phosphate. Positions 168 and 230 each coordinate L-aspartate. Carbamoyl phosphate contacts are provided by Leu-268 and Pro-269.

Belongs to the aspartate/ornithine carbamoyltransferase superfamily. ATCase family. In terms of assembly, heterododecamer (2C3:3R2) of six catalytic PyrB chains organized as two trimers (C3), and six regulatory PyrI chains organized as three dimers (R2).

The catalysed reaction is carbamoyl phosphate + L-aspartate = N-carbamoyl-L-aspartate + phosphate + H(+). Its pathway is pyrimidine metabolism; UMP biosynthesis via de novo pathway; (S)-dihydroorotate from bicarbonate: step 2/3. Its function is as follows. Catalyzes the condensation of carbamoyl phosphate and aspartate to form carbamoyl aspartate and inorganic phosphate, the committed step in the de novo pyrimidine nucleotide biosynthesis pathway. The sequence is that of Aspartate carbamoyltransferase catalytic subunit from Proteus mirabilis (strain HI4320).